We begin with the raw amino-acid sequence, 636 residues long: Chaperone protein DnaK (636 aa).

Thr-203 carries the post-translational modification Phosphothreonine; by autocatalysis. The interval 602-636 (VYGKQQEGAPAQEEPSAEGKKADDEGTVEGEFREV) is disordered. The span at 618-636 (AEGKKADDEGTVEGEFREV) shows a compositional bias: basic and acidic residues.

This sequence belongs to the heat shock protein 70 family.

Acts as a chaperone. This Dehalococcoides mccartyi (strain CBDB1) protein is Chaperone protein DnaK.